A 351-amino-acid chain; its full sequence is GDP-mannose 4,6-dehydratase (351 aa).

NADP(+)-binding positions include 11-16 (GVTGQD), 66-67 (DM), 88-92 (LAAQS), and tyrosine 103. Threonine 135 is an active-site residue. Residues glutamate 137 and tyrosine 159 each act as nucleophile in the active site. Residues lysine 163, histidine 189, and arginine 194 each coordinate NADP(+).

The protein belongs to the NAD(P)-dependent epimerase/dehydratase family. GDP-mannose 4,6-dehydratase subfamily. It depends on NADP(+) as a cofactor.

The catalysed reaction is GDP-alpha-D-mannose = GDP-4-dehydro-alpha-D-rhamnose + H2O. It participates in nucleotide-sugar biosynthesis; GDP-L-fucose biosynthesis via de novo pathway; GDP-L-fucose from GDP-alpha-D-mannose: step 1/2. Its function is as follows. Catalyzes the conversion of GDP-D-mannose to GDP-4-dehydro-6-deoxy-D-mannose. The sequence is that of GDP-mannose 4,6-dehydratase from Sinorhizobium fredii (strain HH103).